Here is a 479-residue protein sequence, read N- to C-terminus: B-cell CLL/lymphoma 6 member B protein (479 aa).

Positions 38–105 constitute a BTB domain; the sequence is TDVTLLVGGQ…MYTSRLRLSP (68 aa). 2 disordered regions span residues 143-190 and 210-259; these read RPLE…PDPK and GSLV…LSPT. Positions 147–160 are enriched in pro residues; the sequence is AEPPTPPTAPPPGS. Over residues 162–172 the composition is skewed to basic and acidic residues; that stretch reads RRSEGHPDPPT. The span at 234-244 shows a compositional bias: low complexity; the sequence is SSSSSSSSSSS. C2H2-type zinc fingers lie at residues 328–350, 356–378, 384–406, 412–434, and 440–463; these read YKCQ…RTVH, YHCS…SRIH, YKCE…VLIH, YPCP…VRIH, and YHCD…RQKH.

As to quaternary structure, associates with BCL6 through the BTB domain. As to expression, ubiquitously expressed with higher expression found in heart and placenta.

It localises to the nucleus. Its function is as follows. Acts as a sequence-specific transcriptional repressor in association with BCL6. May function in a narrow stage or be related to some events in the early B-cell development. This chain is B-cell CLL/lymphoma 6 member B protein (BCL6B), found in Homo sapiens (Human).